The sequence spans 95 residues: Integration host factor subunit beta (95 aa).

It belongs to the bacterial histone-like protein family. Heterodimer of an alpha and a beta chain.

This protein is one of the two subunits of integration host factor, a specific DNA-binding protein that functions in genetic recombination as well as in transcriptional and translational control. The polypeptide is Integration host factor subunit beta (Colwellia psychrerythraea (strain 34H / ATCC BAA-681) (Vibrio psychroerythus)).